Here is a 197-residue protein sequence, read N- to C-terminus: Recombination protein RecR (197 aa).

The C4-type zinc-finger motif lies at 56–71; that stretch reads CRLCNNFSEAEVCEVC. In terms of domain architecture, Toprim spans 79 to 174; sequence RQLAVVEMPA…KVSRLARGVP (96 aa).

Belongs to the RecR family.

In terms of biological role, may play a role in DNA repair. It seems to be involved in an RecBC-independent recombinational process of DNA repair. It may act with RecF and RecO. This is Recombination protein RecR from Thiobacillus denitrificans (strain ATCC 25259 / T1).